The chain runs to 193 residues: GTP cyclohydrolase 1 (193 aa).

3 residues coordinate Zn(2+): cysteine 73, histidine 76, and cysteine 144.

It belongs to the GTP cyclohydrolase I family. In terms of assembly, homomer.

The enzyme catalyses GTP + H2O = 7,8-dihydroneopterin 3'-triphosphate + formate + H(+). It participates in cofactor biosynthesis; 7,8-dihydroneopterin triphosphate biosynthesis; 7,8-dihydroneopterin triphosphate from GTP: step 1/1. The polypeptide is GTP cyclohydrolase 1 (Hyperthermus butylicus (strain DSM 5456 / JCM 9403 / PLM1-5)).